Here is a 158-residue protein sequence, read N- to C-terminus: NAD(P)H-quinone oxidoreductase subunit J, chloroplastic (158 aa).

This sequence belongs to the complex I 30 kDa subunit family. As to quaternary structure, NDH is composed of at least 16 different subunits, 5 of which are encoded in the nucleus.

Its subcellular location is the plastid. The protein resides in the chloroplast thylakoid membrane. The catalysed reaction is a plastoquinone + NADH + (n+1) H(+)(in) = a plastoquinol + NAD(+) + n H(+)(out). It carries out the reaction a plastoquinone + NADPH + (n+1) H(+)(in) = a plastoquinol + NADP(+) + n H(+)(out). Its function is as follows. NDH shuttles electrons from NAD(P)H:plastoquinone, via FMN and iron-sulfur (Fe-S) centers, to quinones in the photosynthetic chain and possibly in a chloroplast respiratory chain. The immediate electron acceptor for the enzyme in this species is believed to be plastoquinone. Couples the redox reaction to proton translocation, and thus conserves the redox energy in a proton gradient. This Nicotiana tabacum (Common tobacco) protein is NAD(P)H-quinone oxidoreductase subunit J, chloroplastic.